A 785-amino-acid chain; its full sequence is 5-methyltetrahydropteroyltriglutamate--homocysteine methyltransferase (785 aa).

Residues 15 to 18 (RELK) and lysine 121 each bind 5-methyltetrahydropteroyltri-L-glutamate. L-homocysteine is bound by residues 460-462 (IGS) and glutamate 513. L-methionine is bound by residues 460–462 (IGS) and glutamate 513. 5-methyltetrahydropteroyltri-L-glutamate contacts are provided by residues 544–545 (RC) and tryptophan 590. Residue aspartate 628 participates in L-homocysteine binding. An L-methionine-binding site is contributed by aspartate 628. 5-methyltetrahydropteroyltri-L-glutamate is bound at residue glutamate 634. 3 residues coordinate Zn(2+): histidine 670, cysteine 672, and glutamate 694. Histidine 723 functions as the Proton donor in the catalytic mechanism. Cysteine 755 contributes to the Zn(2+) binding site.

This sequence belongs to the vitamin-B12 independent methionine synthase family. It depends on Zn(2+) as a cofactor.

The enzyme catalyses 5-methyltetrahydropteroyltri-L-glutamate + L-homocysteine = tetrahydropteroyltri-L-glutamate + L-methionine. It participates in amino-acid biosynthesis; L-methionine biosynthesis via de novo pathway; L-methionine from L-homocysteine (MetE route): step 1/1. In terms of biological role, catalyzes the transfer of a methyl group from 5-methyltetrahydrofolate to homocysteine resulting in methionine formation. In Nitratidesulfovibrio vulgaris (strain ATCC 29579 / DSM 644 / CCUG 34227 / NCIMB 8303 / VKM B-1760 / Hildenborough) (Desulfovibrio vulgaris), this protein is 5-methyltetrahydropteroyltriglutamate--homocysteine methyltransferase.